The sequence spans 364 residues: uncharacterized protein (364 aa).

This is an uncharacterized protein from Saccharum officinarum (Sugarcane).